Consider the following 427-residue polypeptide: Glutamate-1-semialdehyde 2,1-aminomutase (427 aa).

Lys265 bears the N6-(pyridoxal phosphate)lysine mark.

Belongs to the class-III pyridoxal-phosphate-dependent aminotransferase family. HemL subfamily. In terms of assembly, homodimer. Pyridoxal 5'-phosphate serves as cofactor.

The protein localises to the cytoplasm. The enzyme catalyses (S)-4-amino-5-oxopentanoate = 5-aminolevulinate. It functions in the pathway porphyrin-containing compound metabolism; protoporphyrin-IX biosynthesis; 5-aminolevulinate from L-glutamyl-tRNA(Glu): step 2/2. This Burkholderia vietnamiensis (strain G4 / LMG 22486) (Burkholderia cepacia (strain R1808)) protein is Glutamate-1-semialdehyde 2,1-aminomutase.